Consider the following 306-residue polypeptide: UDP-3-O-acyl-N-acetylglucosamine deacetylase (306 aa).

The Zn(2+) site is built by histidine 79, histidine 238, and aspartate 242. Histidine 265 serves as the catalytic Proton donor.

This sequence belongs to the LpxC family. Zn(2+) is required as a cofactor.

The catalysed reaction is a UDP-3-O-[(3R)-3-hydroxyacyl]-N-acetyl-alpha-D-glucosamine + H2O = a UDP-3-O-[(3R)-3-hydroxyacyl]-alpha-D-glucosamine + acetate. It functions in the pathway glycolipid biosynthesis; lipid IV(A) biosynthesis; lipid IV(A) from (3R)-3-hydroxytetradecanoyl-[acyl-carrier-protein] and UDP-N-acetyl-alpha-D-glucosamine: step 2/6. Catalyzes the hydrolysis of UDP-3-O-myristoyl-N-acetylglucosamine to form UDP-3-O-myristoylglucosamine and acetate, the committed step in lipid A biosynthesis. The polypeptide is UDP-3-O-acyl-N-acetylglucosamine deacetylase (Shewanella oneidensis (strain ATCC 700550 / JCM 31522 / CIP 106686 / LMG 19005 / NCIMB 14063 / MR-1)).